A 333-amino-acid chain; its full sequence is Protein FanF (333 aa).

A signal peptide spans 1-22 (MKNKYNLLFFLFLLCYGDVALA).

In terms of processing, three disulfide bonds are present.

It localises to the fimbrium. In terms of biological role, minor component of K99 fimbriae. Is not required for binding of K99 fimbriae to the ganglioside receptor. May play a role in initiation, elongation and flexibility of the fimbriae. In Escherichia coli, this protein is Protein FanF (fanF).